A 390-amino-acid polypeptide reads, in one-letter code: Acetate kinase (390 aa).

Asn10 is a Mg(2+) binding site. Residue Lys17 coordinates ATP. Residue Arg89 coordinates substrate. Catalysis depends on Asp146, which acts as the Proton donor/acceptor. ATP-binding positions include 204–208 (HLGNG), 278–280 (DMR), and 323–327 (GIGEN). Glu376 contributes to the Mg(2+) binding site.

Belongs to the acetokinase family. In terms of assembly, homodimer. Mg(2+) serves as cofactor. Mn(2+) is required as a cofactor.

It localises to the cytoplasm. It catalyses the reaction acetate + ATP = acetyl phosphate + ADP. The protein operates within metabolic intermediate biosynthesis; acetyl-CoA biosynthesis; acetyl-CoA from acetate: step 1/2. In terms of biological role, catalyzes the formation of acetyl phosphate from acetate and ATP. Can also catalyze the reverse reaction. This Mycoplasma pneumoniae (strain ATCC 29342 / M129 / Subtype 1) (Mycoplasmoides pneumoniae) protein is Acetate kinase.